We begin with the raw amino-acid sequence, 278 residues long: NAD kinase (278 aa).

Catalysis depends on Asp67, which acts as the Proton acceptor. NAD(+) is bound by residues 67–68 (DG), Arg72, 137–138 (NE), Lys148, Arg165, Asp167, 178–183 (TGYALS), and Gln237.

It belongs to the NAD kinase family. A divalent metal cation serves as cofactor.

It is found in the cytoplasm. The enzyme catalyses NAD(+) + ATP = ADP + NADP(+) + H(+). In terms of biological role, involved in the regulation of the intracellular balance of NAD and NADP, and is a key enzyme in the biosynthesis of NADP. Catalyzes specifically the phosphorylation on 2'-hydroxyl of the adenosine moiety of NAD to yield NADP. In Thermococcus gammatolerans (strain DSM 15229 / JCM 11827 / EJ3), this protein is NAD kinase.